Here is a 220-residue protein sequence, read N- to C-terminus: Serine protease-like protein 51 (220 aa).

The N-terminal stretch at 1 to 16 is a signal peptide; it reads MFQLLIPLLLALKGHA. Positions 23–220 constitute a Peptidase S1 domain; it reads VQCGHRPAFP…SSKWVSSVGA (198 aa). An N-linked (GlcNAc...) asparagine glycan is attached at N33. A disulfide bridge connects residues C64 and C80. N-linked (GlcNAc...) asparagine glycosylation is present at N92. C157 and C170 are joined by a disulfide.

The protein belongs to the peptidase S1 family.

It localises to the secreted. This chain is Serine protease-like protein 51, found in Homo sapiens (Human).